Consider the following 455-residue polypeptide: Bifunctional protein GlmU (455 aa).

Residues 1–227 are pyrophosphorylase; sequence MGLSVIILAA…CEEVQGVNDR (227 aa). UDP-N-acetyl-alpha-D-glucosamine is bound by residues 8–11, lysine 22, glutamine 73, 78–79, 100–102, glycine 137, glutamate 152, asparagine 167, and asparagine 225; these read LAAG, GT, and YGD. Residue aspartate 102 participates in Mg(2+) binding. Residue asparagine 225 coordinates Mg(2+). The tract at residues 228–248 is linker; the sequence is WELTKLERYYQRLMAKKLSLA. The segment at 249–455 is N-acetyltransferase; that stretch reads GVTIIDPERF…KGWHRPTKKE (207 aa). 2 residues coordinate UDP-N-acetyl-alpha-D-glucosamine: arginine 332 and lysine 350. Histidine 362 (proton acceptor) is an active-site residue. UDP-N-acetyl-alpha-D-glucosamine is bound by residues tyrosine 365 and asparagine 376. Residues alanine 379, 385 to 386, serine 404, alanine 422, and arginine 439 each bind acetyl-CoA; that span reads NY.

This sequence in the N-terminal section; belongs to the N-acetylglucosamine-1-phosphate uridyltransferase family. It in the C-terminal section; belongs to the transferase hexapeptide repeat family. Homotrimer. Mg(2+) serves as cofactor.

It localises to the cytoplasm. It catalyses the reaction alpha-D-glucosamine 1-phosphate + acetyl-CoA = N-acetyl-alpha-D-glucosamine 1-phosphate + CoA + H(+). It carries out the reaction N-acetyl-alpha-D-glucosamine 1-phosphate + UTP + H(+) = UDP-N-acetyl-alpha-D-glucosamine + diphosphate. Its pathway is nucleotide-sugar biosynthesis; UDP-N-acetyl-alpha-D-glucosamine biosynthesis; N-acetyl-alpha-D-glucosamine 1-phosphate from alpha-D-glucosamine 6-phosphate (route II): step 2/2. It functions in the pathway nucleotide-sugar biosynthesis; UDP-N-acetyl-alpha-D-glucosamine biosynthesis; UDP-N-acetyl-alpha-D-glucosamine from N-acetyl-alpha-D-glucosamine 1-phosphate: step 1/1. It participates in bacterial outer membrane biogenesis; LPS lipid A biosynthesis. In terms of biological role, catalyzes the last two sequential reactions in the de novo biosynthetic pathway for UDP-N-acetylglucosamine (UDP-GlcNAc). The C-terminal domain catalyzes the transfer of acetyl group from acetyl coenzyme A to glucosamine-1-phosphate (GlcN-1-P) to produce N-acetylglucosamine-1-phosphate (GlcNAc-1-P), which is converted into UDP-GlcNAc by the transfer of uridine 5-monophosphate (from uridine 5-triphosphate), a reaction catalyzed by the N-terminal domain. The protein is Bifunctional protein GlmU of Coxiella burnetii (strain Dugway 5J108-111).